A 465-amino-acid chain; its full sequence is tRNA modification GTPase MnmE (465 aa).

The (6S)-5-formyl-5,6,7,8-tetrahydrofolate site is built by Arg27, Glu91, and Arg130. The TrmE-type G domain maps to 227 to 386 (GLSTAIIGRP…LEAKIADLFF (160 aa)). Asn237 is a binding site for K(+). GTP is bound by residues 237–242 (NVGKSS), 256–262 (TDIAGTT), and 281–284 (DTAG). Ser241 is a binding site for Mg(2+). K(+)-binding residues include Thr256, Ile258, and Thr261. Thr262 is a Mg(2+) binding site. (6S)-5-formyl-5,6,7,8-tetrahydrofolate is bound at residue Lys465.

This sequence belongs to the TRAFAC class TrmE-Era-EngA-EngB-Septin-like GTPase superfamily. TrmE GTPase family. Homodimer. Heterotetramer of two MnmE and two MnmG subunits. K(+) is required as a cofactor.

It is found in the cytoplasm. Exhibits a very high intrinsic GTPase hydrolysis rate. Involved in the addition of a carboxymethylaminomethyl (cmnm) group at the wobble position (U34) of certain tRNAs, forming tRNA-cmnm(5)s(2)U34. The protein is tRNA modification GTPase MnmE of Enterococcus faecalis (strain ATCC 700802 / V583).